Consider the following 601-residue polypeptide: Probable N-acetylgalactosaminyltransferase 7 (601 aa).

Residues 1–20 (MIIARKKLQLQRLWRQRGCR) are Cytoplasmic-facing. The helical; Signal-anchor for type II membrane protein transmembrane segment at 21–38 (VATYICLGVLVLFGFVYN) threads the bilayer. Topologically, residues 39 to 601 (SKGNSMSSIK…FVWKEFYQSS (563 aa)) are lumenal. The interval 61-108 (DLTNKELPGGPDPNTIFRGSELGNYEPKEPEIPSNQPGEHGKPVPVTD) is disordered. The N-linked (GlcNAc...) asparagine glycan is linked to Asn135. Intrachain disulfides connect Cys146–Cys382, Cys373–Cys452, Cys490–Cys506, Cys529–Cys542, and Cys568–Cys583. A catalytic subdomain A region spans residues 155 to 265 (LPTVSVVVVF…TNWLPPLLAP (111 aa)). 2 residues coordinate substrate: Asp196 and Arg226. 2 residues coordinate Mn(2+): Asp249 and His251. The tract at residues 328–390 (PFRSPTHAGG…PCSHVGHVYR (63 aa)) is catalytic subdomain B. Trp359 is a substrate binding site. His387 contacts Mn(2+). Residues Arg390 and Tyr395 each coordinate substrate. The 119-residue stretch at 477–595 (DVWGEARNPA…DNERQKFVWK (119 aa)) folds into the Ricin B-type lectin domain.

Belongs to the glycosyltransferase 2 family. GalNAc-T subfamily. The cofactor is Mn(2+).

It localises to the golgi apparatus membrane. The protein operates within protein modification; protein glycosylation. Probable glycopeptide transferase involved in O-linked oligosaccharide biosynthesis. Glycopeptide transferases catalyze the transfer of an N-acetyl-D-galactosamine residue to an already glycosylated peptide. In contrast to other members of the family, it does not act as a peptide transferase that transfers GalNAc onto serine or threonine residue on peptides that have been tested. Some peptide transferase activity is however not excluded, considering that its appropriate peptide substrate may remain unidentified. The polypeptide is Probable N-acetylgalactosaminyltransferase 7 (gly-7) (Caenorhabditis elegans).